Reading from the N-terminus, the 498-residue chain is Glycerol kinase (498 aa).

Threonine 12 serves as a coordination point for ADP. 3 residues coordinate ATP: threonine 12, threonine 13, and serine 14. Position 12 (threonine 12) interacts with sn-glycerol 3-phosphate. Arginine 16 serves as a coordination point for ADP. Residues arginine 82, glutamate 83, tyrosine 134, and aspartate 243 each contribute to the sn-glycerol 3-phosphate site. The glycerol site is built by arginine 82, glutamate 83, tyrosine 134, aspartate 243, and glutamine 244. The ADP site is built by threonine 265 and glycine 308. 4 residues coordinate ATP: threonine 265, glycine 308, glutamine 312, and glycine 409. ADP is bound by residues glycine 409 and asparagine 413.

It belongs to the FGGY kinase family. Homotetramer and homodimer (in equilibrium).

It catalyses the reaction glycerol + ATP = sn-glycerol 3-phosphate + ADP + H(+). The protein operates within polyol metabolism; glycerol degradation via glycerol kinase pathway; sn-glycerol 3-phosphate from glycerol: step 1/1. Activated by phosphorylation and inhibited by fructose 1,6-bisphosphate (FBP). Functionally, key enzyme in the regulation of glycerol uptake and metabolism. Catalyzes the phosphorylation of glycerol to yield sn-glycerol 3-phosphate. This is Glycerol kinase from Clostridium botulinum (strain Loch Maree / Type A3).